Here is a 645-residue protein sequence, read N- to C-terminus: Acetyl-coenzyme A synthetase (645 aa).

Residues 190-193 (RGGK) and Thr308 each bind CoA. Residues 384 to 386 (GEP), 408 to 413 (DTWWQT), Asp497, and Arg512 contribute to the ATP site. A CoA-binding site is contributed by Ser520. Arg523 contributes to the ATP binding site. Mg(2+) is bound by residues Val534, His536, and Ile539. Lys606 is subject to N6-acetyllysine.

The protein belongs to the ATP-dependent AMP-binding enzyme family. Mg(2+) serves as cofactor. In terms of processing, acetylated. Deacetylation by the SIR2-homolog deacetylase activates the enzyme.

The catalysed reaction is acetate + ATP + CoA = acetyl-CoA + AMP + diphosphate. Catalyzes the conversion of acetate into acetyl-CoA (AcCoA), an essential intermediate at the junction of anabolic and catabolic pathways. AcsA undergoes a two-step reaction. In the first half reaction, AcsA combines acetate with ATP to form acetyl-adenylate (AcAMP) intermediate. In the second half reaction, it can then transfer the acetyl group from AcAMP to the sulfhydryl group of CoA, forming the product AcCoA. This chain is Acetyl-coenzyme A synthetase, found in Alcanivorax borkumensis (strain ATCC 700651 / DSM 11573 / NCIMB 13689 / SK2).